Consider the following 550-residue polypeptide: Pectinesterase 2.2 (550 aa).

Asn179 carries N-linked (GlcNAc...) asparagine glycosylation. Substrate-binding residues include Thr312 and Gln342. Cys331 and Cys358 are disulfide-bonded. Asp365 serves as the catalytic Proton donor. Asp386 (nucleophile) is an active-site residue. Cys399 and Cys433 are oxidised to a cystine. 2 residues coordinate substrate: Arg454 and Trp456.

This sequence in the N-terminal section; belongs to the PMEI family. In the C-terminal section; belongs to the pectinesterase family.

It localises to the secreted. The protein localises to the cell wall. It carries out the reaction [(1-&gt;4)-alpha-D-galacturonosyl methyl ester](n) + n H2O = [(1-&gt;4)-alpha-D-galacturonosyl](n) + n methanol + n H(+). It functions in the pathway glycan metabolism; pectin degradation; 2-dehydro-3-deoxy-D-gluconate from pectin: step 1/5. In terms of biological role, pectinesterase may play a role in cell wall metabolism during fruit growth and development prior to ripening and may be required for preparing cell walls for softening by polygalacturonase during fruit ripening. This is Pectinesterase 2.2 (PME2.2) from Solanum lycopersicum (Tomato).